Consider the following 948-residue polypeptide: Coiled-coil domain-containing protein 66 (948 aa).

A phosphothreonine mark is found at T115 and T121. S369 bears the Phosphoserine mark. The tract at residues 458-499 is disordered; that stretch reads DRRRQKQLEHQKAITAQVEEKRRKKQLEEEQRKKEEQEEELR. Residues 467-558 are a coiled coil; the sequence is HQKAITAQVE…EQRIRELAQK (92 aa). The mediates localization to cilia, centrosomes and spindle microtubules and the interaction with PCM1, CEP290, CEP104 and CSPP1 stretch occupies residues 570–948; the sequence is GVDTIQMEYN…NQEESFGSSF (379 aa). S606 bears the Phosphoserine mark. 2 disordered regions span residues 690-713 and 788-808; these read QTKH…KRYI and SFSK…RTQQ.

As to quaternary structure, homodimer; disulfide-linked. Interacts with CEP290. Interacts with PCM1. Interacts with ARMC9, TOGARAM1, CSPP1 and CEP104. Interacts with CDK5RAP2, CEP152, CEP192, TBG1 and PRC1. In terms of tissue distribution, widely expressed (at protein level). Expressed in retina, mainly in photoreceptors but also in outer plexiform and ganglion cell layers (at protein level).

It is found in the cytoplasm. The protein resides in the cytoskeleton. Its subcellular location is the microtubule organizing center. The protein localises to the centrosome. It localises to the centriolar satellite. It is found in the cell projection. The protein resides in the cilium. Its subcellular location is the cilium basal body. The protein localises to the cilium axoneme. It localises to the photoreceptor inner segment. It is found in the photoreceptor outer segment. The protein resides in the spindle. Its subcellular location is the midbody. In terms of biological role, microtubule-binding protein required for ciliogenesis. May function in ciliogenesis by mediating the transport of proteins like BBS4 to the cilium, but also through the organization of the centriolar satellites. Required for the assembly of signaling-competent cilia with proper structure and length. Mediates this function in part by regulating transition zone assembly and basal body recruitment of the IFT-B complex. Cooperates with the ciliopathy proteins CSPP1 and CEP104 during cilium length regulation. Plays two important roles during cell division. First, is required for mitotic progression via regulation of spindle assembly, organization and orientation, levels of spindle microtubules (MTs), kinetochore-fiber integrity, and chromosome alignment. Second, functions during cytokinesis in part by regulating assembly and organization of central spindle and midbody MTs. Plays a role in retina morphogenesis and/or homeostasis. This is Coiled-coil domain-containing protein 66 from Homo sapiens (Human).